Reading from the N-terminus, the 401-residue chain is MFKNNKPPKYGNLVTILSLDGGGVRGIIGGVILANLEKHLQEIDNDESVRLADYFDVIAGTSTGGLMTAMLTAPNDSGRPLYAAKDIVPFYLEESPKIFYGSKWWDPSALWALFRPKYNGEYLHTRLGEILGETKLDQTLTNVVIPTFDIKKLQPTIFSSYHASVDPSLNAKLSDICIGTSAAPFYLPPYKFPENDKMRTFNLIDGGVTANDPTLVGMTAMSRKSIIKHPDMDGFKPLEYEKYIVISIGTGSAKREEYYSAVEAAKWGFENWAYNWKHKTTPILDIIFESSRDMVQYHTSVLFQALESEDNYLRIDADTLKKDEVFMDDSETLNLENLKNIGEKLLDTNVMRMNLDTYTYEPIPKTVNNDQELKRFAKILSDEKKLRNKTFKTMIDDSSNS.

A PNPLA domain is found at 17-218; the sequence is LSLDGGGVRG…TANDPTLVGM (202 aa). The short motif at 21-26 is the GXGXXG element; that stretch reads GGGVRG. The GXSXG motif lies at 60 to 64; sequence GTSTG. S62 functions as the Nucleophile in the catalytic mechanism. The active-site Proton acceptor is the D205. The DGA/G signature appears at 205-207; sequence DGG.

It belongs to the patatin family.

Its function is as follows. Possesses non-specific lipolytic acyl hydrolase (LAH) activity. Hydrolyzes phospholipids as well as galactolipids. May play a role in disease resistance. This is Patatin-like protein 4 (PLP4) from Arabidopsis thaliana (Mouse-ear cress).